We begin with the raw amino-acid sequence, 887 residues long: Pyruvate, phosphate dikinase 2 (887 aa).

At Thr467 the chain carries Phosphothreonine; by PDRP1. Residue His469 is the Tele-phosphohistidine intermediate of the active site. Residues Arg575, Arg632, Glu761, Gly782, Thr783, Asn784, and Asp785 each coordinate substrate. A Mg(2+)-binding site is contributed by Glu761. Residue Asp785 participates in Mg(2+) binding. Cys847 (proton donor) is an active-site residue.

This sequence belongs to the PEP-utilizing enzyme family. Mg(2+) is required as a cofactor.

It is found in the cytoplasm. The enzyme catalyses pyruvate + phosphate + ATP = phosphoenolpyruvate + AMP + diphosphate + H(+). In terms of biological role, formation of phosphoenolpyruvate. The chain is Pyruvate, phosphate dikinase 2 (PPDK2) from Oryza sativa subsp. japonica (Rice).